The primary structure comprises 127 residues: Large-conductance mechanosensitive channel (127 aa).

3 consecutive transmembrane segments (helical) span residues 9–29 (EFAM…GVAF), 32–52 (IVTA…LGGV), and 75–95 (VIDF…INLL).

The protein belongs to the MscL family. As to quaternary structure, homopentamer.

Its subcellular location is the cell inner membrane. Functionally, channel that opens in response to stretch forces in the membrane lipid bilayer. May participate in the regulation of osmotic pressure changes within the cell. This is Large-conductance mechanosensitive channel from Legionella pneumophila (strain Corby).